An 86-amino-acid polypeptide reads, in one-letter code: Serine protease inhibitor Kazal-type 9 (86 aa).

Residues 1–19 form the signal peptide; that stretch reads MRATAIVLLLALTLATMFS. One can recognise a Kazal-like domain in the interval 26–86; it reads TKQMVDCSHY…TLKFVHFGKC (61 aa). 3 cysteine pairs are disulfide-bonded: Cys-32-Cys-68, Cys-46-Cys-65, and Cys-54-Cys-86.

Dimer. Interacts with KLK5 and KLK8. In terms of tissue distribution, skin. Highly expressed at sites of hyperkeratosis. Also detected in thymus, tonsils, testis, pancreas, liver, placenta and brain. Expressed at stratum granulosum and stratum corneum at palmar and plantar sites (at protein level).

The protein resides in the secreted. Serine protease inhibitor which specifically inhibits KLK5. May contribute to the regulation of the desquamation process in skin by inhibiting KLK5. This chain is Serine protease inhibitor Kazal-type 9 (SPINK9), found in Homo sapiens (Human).